A 175-amino-acid polypeptide reads, in one-letter code: GLLGLGYGGYGYGAALAAPAAVSYAAPAIAAAPAVSYAAPAIAAAPAISYAAPAIAAAPAISYAAPAIAAAPAVSYAAPAIAAAPAISYAAAPALRYAAAPAIRYAAPAVARVAPAISYAAVAVARVAPAVSYAAPALSYARYAAPAVSYAAPALSYAAPALSYAAPAIAKYALH.

19 consecutive repeat copies span residues 17-20 (AAPA), 25-28 (AAPA), 31-34 (AAPA), 38-41 (AAPA), 44-47 (AAPA), 51-54 (AAPA), 57-60 (AAPA), 64-67 (AAPA), 70-73 (AAPA), 77-80 (AAPA), 83-86 (AAPA), 91-94 (AAPA), 99-102 (AAPA), 106-109 (AAPA), 134-137 (AAPA), 144-147 (AAPA), 151-154 (AAPA), 158-161 (AAPA), and 165-168 (AAPA).

Component of the cuticle of migratory locust which contains more than 100 different structural proteins. This is Cuticle protein 16.5, isoform B from Locusta migratoria (Migratory locust).